A 185-amino-acid chain; its full sequence is Elongation factor P 1 (185 aa).

This sequence belongs to the elongation factor P family.

The protein localises to the cytoplasm. It participates in protein biosynthesis; polypeptide chain elongation. Its function is as follows. Involved in peptide bond synthesis. Stimulates efficient translation and peptide-bond synthesis on native or reconstituted 70S ribosomes in vitro. Probably functions indirectly by altering the affinity of the ribosome for aminoacyl-tRNA, thus increasing their reactivity as acceptors for peptidyl transferase. In Chlamydia pneumoniae (Chlamydophila pneumoniae), this protein is Elongation factor P 1 (efp1).